Consider the following 496-residue polypeptide: Cytochrome P450 4ae1 (496 aa).

Residue Cys443 coordinates heme.

It belongs to the cytochrome P450 family. Heme is required as a cofactor.

The protein localises to the endoplasmic reticulum membrane. Its subcellular location is the microsome membrane. In terms of biological role, may be involved in the metabolism of insect hormones and in the breakdown of synthetic insecticides. In Drosophila melanogaster (Fruit fly), this protein is Cytochrome P450 4ae1 (Cyp4ae1).